The sequence spans 926 residues: Glycogenin (926 aa).

4 residues coordinate UDP: Leu10, Thr12, Tyr16, and Arg85. The UDP-alpha-D-glucose site is built by Leu10, Thr12, Tyr16, Arg85, Lys94, Asp111, Ala112, Asp113, Asn145, Ser146, Asp184, Asp187, and Gln188. UDP contacts are provided by Asp111, Ala112, and Asp113. Asp111 serves as a coordination point for Mn(2+). Asp113 is a binding site for Mn(2+). An O-linked (Glc...) tyrosine glycan is attached at Tyr219. UDP contacts are provided by His236, Gly239, and Lys242. Mn(2+) is bound at residue His236. The UDP-alpha-D-glucose site is built by Gly239 and Lys242. Disordered regions lie at residues 379–432, 452–476, 547–584, 611–749, and 768–903; these read PSVS…PEMS, YYAH…LPKE, SIQN…PPRH, MSGK…ETVQ, and LPHA…PNTD. A compositionally biased stretch (pro residues) spans 386–402; that stretch reads LTPPPADAAPAPAPAPV. Residues 404–413 show a composition bias toward polar residues; that stretch reads TQTEQKTAQP. The segment covering 456–469 has biased composition (basic and acidic residues); the sequence is PESHRPATEHKEPE. Residues 557–566 are compositionally biased toward low complexity; it reads AHSQHQSHAT. Positions 655–683 are enriched in polar residues; the sequence is SLHSLQSVPGTPRTQYSTFGKSPRLTNAR. Acidic residues predominate over residues 692–704; sequence EQPEDSADGDDEN. Over residues 733–745 the composition is skewed to basic and acidic residues; that stretch reads DRWAQTDRVKTVD. Residues 788–798 are compositionally biased toward gly residues; sequence SGNGRAGGGGQ. Residues 800-812 are compositionally biased toward polar residues; that stretch reads EAQTQHQSTYYEY. Low complexity-rich tracts occupy residues 813–824 and 851–875; these read QQQHPHSQQSRQ and HAQG…NPNL.

This sequence belongs to the glycosyltransferase 8 family. Glycogenin subfamily. Requires Mn(2+) as cofactor.

It is found in the cytoplasm. The protein localises to the vacuole. The enzyme catalyses L-tyrosyl-[glycogenin] + UDP-alpha-D-glucose = alpha-D-glucosyl-L-tyrosyl-[glycogenin] + UDP + H(+). It carries out the reaction [1,4-alpha-D-glucosyl](n)-L-tyrosyl-[glycogenin] + UDP-alpha-D-glucose = [1,4-alpha-D-glucosyl](n+1)-L-tyrosyl-[glycogenin] + UDP + H(+). In terms of biological role, self-glucosylating initiator of glycogen synthesis. It catalyzes the formation of a short alpha (1,4)-glucosyl chain covalently attached via a glucose 1-O-tyrosyl linkage to internal tyrosine residues and these chains act as primers for the elongation reaction catalyzed by glycogen synthase. In Cryptococcus neoformans var. grubii serotype A (strain H99 / ATCC 208821 / CBS 10515 / FGSC 9487) (Filobasidiella neoformans var. grubii), this protein is Glycogenin.